The primary structure comprises 278 residues: Large ribosomal subunit protein uL2 (278 aa).

Residues 201–278 are disordered; that stretch reads HGNINDGKAG…IMRSRHQRKK (78 aa). Residues 210-221 show a composition bias toward basic residues; sequence GRSRWRGKRPHV.

Belongs to the universal ribosomal protein uL2 family. Part of the 50S ribosomal subunit. Forms a bridge to the 30S subunit in the 70S ribosome.

One of the primary rRNA binding proteins. Required for association of the 30S and 50S subunits to form the 70S ribosome, for tRNA binding and peptide bond formation. It has been suggested to have peptidyltransferase activity; this is somewhat controversial. Makes several contacts with the 16S rRNA in the 70S ribosome. The polypeptide is Large ribosomal subunit protein uL2 (Rhizobium meliloti (strain 1021) (Ensifer meliloti)).